We begin with the raw amino-acid sequence, 404 residues long: Probable tRNA sulfurtransferase (404 aa).

Residues Gln-60–Glu-165 enclose the THUMP domain. ATP contacts are provided by residues Met-183 to Leu-184, His-208 to Phe-209, Arg-265, Gly-287, and Gln-296.

The protein belongs to the ThiI family.

The protein localises to the cytoplasm. It carries out the reaction [ThiI sulfur-carrier protein]-S-sulfanyl-L-cysteine + a uridine in tRNA + 2 reduced [2Fe-2S]-[ferredoxin] + ATP + H(+) = [ThiI sulfur-carrier protein]-L-cysteine + a 4-thiouridine in tRNA + 2 oxidized [2Fe-2S]-[ferredoxin] + AMP + diphosphate. The catalysed reaction is [ThiS sulfur-carrier protein]-C-terminal Gly-Gly-AMP + S-sulfanyl-L-cysteinyl-[cysteine desulfurase] + AH2 = [ThiS sulfur-carrier protein]-C-terminal-Gly-aminoethanethioate + L-cysteinyl-[cysteine desulfurase] + A + AMP + 2 H(+). Its pathway is cofactor biosynthesis; thiamine diphosphate biosynthesis. Functionally, catalyzes the ATP-dependent transfer of a sulfur to tRNA to produce 4-thiouridine in position 8 of tRNAs, which functions as a near-UV photosensor. Also catalyzes the transfer of sulfur to the sulfur carrier protein ThiS, forming ThiS-thiocarboxylate. This is a step in the synthesis of thiazole, in the thiamine biosynthesis pathway. The sulfur is donated as persulfide by IscS. The polypeptide is Probable tRNA sulfurtransferase (Streptococcus pyogenes serotype M1).